The primary structure comprises 579 residues: uncharacterized protein (579 aa).

Positions 449 to 577 (QKGVFILVDI…GKNRLMIHDS (129 aa)) constitute a GGDEF domain.

This is an uncharacterized protein from Bacillus subtilis (strain 168).